A 102-amino-acid polypeptide reads, in one-letter code: MSTLCSSIGWRLLVALINSAGVCGSFNDRTPASSGHAFTNAPTPNVKPAVGKITALLTNLNRNGIVLDILELTLDLSCHLVIVYKNKYLVLYPLFEAVPFRR.

This is an uncharacterized protein from Saccharomyces cerevisiae (strain ATCC 204508 / S288c) (Baker's yeast).